Here is an 89-residue protein sequence, read N- to C-terminus: Small ribosomal subunit protein uS15 (89 aa).

The protein belongs to the universal ribosomal protein uS15 family. In terms of assembly, part of the 30S ribosomal subunit. Forms a bridge to the 50S subunit in the 70S ribosome, contacting the 23S rRNA.

In terms of biological role, one of the primary rRNA binding proteins, it binds directly to 16S rRNA where it helps nucleate assembly of the platform of the 30S subunit by binding and bridging several RNA helices of the 16S rRNA. Forms an intersubunit bridge (bridge B4) with the 23S rRNA of the 50S subunit in the ribosome. This Rhodospirillum centenum (strain ATCC 51521 / SW) protein is Small ribosomal subunit protein uS15.